A 166-amino-acid polypeptide reads, in one-letter code: Interferon gamma (166 aa).

An N-terminal signal peptide occupies residues 1–23 (MNYTSYILAFQLCVILGSSGCYC). Gln-24 carries the pyrrolidone carboxylic acid modification. Residues Asn-39 and Asn-106 are each glycosylated (N-linked (GlcNAc...) asparagine). Positions 147–166 (SNLRKRKRRQNQIQGRRASK) are disordered.

The protein belongs to the type II (or gamma) interferon family. Homodimer. Interacts with IFNGR1 (via extracellular domain); this interaction promotes IFNGR1 dimerization. Released primarily from activated T lymphocytes.

It localises to the secreted. Its function is as follows. Type II interferon produced by immune cells such as T-cells and NK cells that plays crucial roles in antimicrobial, antiviral, and antitumor responses by activating effector immune cells and enhancing antigen presentation. Primarily signals through the JAK-STAT pathway after interaction with its receptor IFNGR1 to affect gene regulation. Upon IFNG binding, IFNGR1 intracellular domain opens out to allow association of downstream signaling components JAK2, JAK1 and STAT1, leading to STAT1 activation, nuclear translocation and transcription of IFNG-regulated genes. Many of the induced genes are transcription factors such as IRF1 that are able to further drive regulation of a next wave of transcription. Plays a role in class I antigen presentation pathway by inducing a replacement of catalytic proteasome subunits with immunoproteasome subunits. In turn, increases the quantity, quality, and repertoire of peptides for class I MHC loading. Increases the efficiency of peptide generation also by inducing the expression of activator PA28 that associates with the proteasome and alters its proteolytic cleavage preference. Up-regulates as well MHC II complexes on the cell surface by promoting expression of several key molecules such as cathepsins B/CTSB, H/CTSH, and L/CTSL. Participates in the regulation of hematopoietic stem cells during development and under homeostatic conditions by affecting their development, quiescence, and differentiation. This is Interferon gamma (IFNG) from Lama glama (Llama).